Consider the following 322-residue polypeptide: N-acetyl-gamma-glutamyl-phosphate reductase (322 aa).

Residue Cys132 is part of the active site.

Belongs to the NAGSA dehydrogenase family. Type 1 subfamily.

It localises to the cytoplasm. The catalysed reaction is N-acetyl-L-glutamate 5-semialdehyde + phosphate + NADP(+) = N-acetyl-L-glutamyl 5-phosphate + NADPH + H(+). Its pathway is amino-acid biosynthesis; L-arginine biosynthesis; N(2)-acetyl-L-ornithine from L-glutamate: step 3/4. In terms of biological role, catalyzes the NADPH-dependent reduction of N-acetyl-5-glutamyl phosphate to yield N-acetyl-L-glutamate 5-semialdehyde. This Phocaeicola vulgatus (strain ATCC 8482 / DSM 1447 / JCM 5826 / CCUG 4940 / NBRC 14291 / NCTC 11154) (Bacteroides vulgatus) protein is N-acetyl-gamma-glutamyl-phosphate reductase.